The primary structure comprises 168 residues: Crossover junction endodeoxyribonuclease RuvC (168 aa).

Residues Asp7, Glu64, and Asp136 contribute to the active site. Mg(2+) is bound by residues Asp7, Glu64, and Asp136.

It belongs to the RuvC family. As to quaternary structure, homodimer which binds Holliday junction (HJ) DNA. The HJ becomes 2-fold symmetrical on binding to RuvC with unstacked arms; it has a different conformation from HJ DNA in complex with RuvA. In the full resolvosome a probable DNA-RuvA(4)-RuvB(12)-RuvC(2) complex forms which resolves the HJ. The cofactor is Mg(2+).

The protein localises to the cytoplasm. The enzyme catalyses Endonucleolytic cleavage at a junction such as a reciprocal single-stranded crossover between two homologous DNA duplexes (Holliday junction).. In terms of biological role, the RuvA-RuvB-RuvC complex processes Holliday junction (HJ) DNA during genetic recombination and DNA repair. Endonuclease that resolves HJ intermediates. Cleaves cruciform DNA by making single-stranded nicks across the HJ at symmetrical positions within the homologous arms, yielding a 5'-phosphate and a 3'-hydroxyl group; requires a central core of homology in the junction. The consensus cleavage sequence is 5'-(A/T)TT(C/G)-3'. Cleavage occurs on the 3'-side of the TT dinucleotide at the point of strand exchange. HJ branch migration catalyzed by RuvA-RuvB allows RuvC to scan DNA until it finds its consensus sequence, where it cleaves and resolves the cruciform DNA. The sequence is that of Crossover junction endodeoxyribonuclease RuvC from Polynucleobacter necessarius subsp. necessarius (strain STIR1).